The sequence spans 274 residues: Mitochondrial outer membrane protein porin 3 (274 aa).

Position 76 is a phosphoserine (Ser76).

Belongs to the eukaryotic mitochondrial porin (TC 1.B.8.1) family. As to quaternary structure, interacts with KIN14F/KP1. Interacts with FBA6 and GAPC1. As to expression, expressed in leaf tips, anthers and stigma.

The protein resides in the cell membrane. The protein localises to the mitochondrion outer membrane. Functionally, forms a channel through the mitochondrial outer membrane that allows diffusion of small hydrophilic molecules. The channel adopts an open conformation at low or zero membrane potential and a closed conformation at potentials above 30-40 mV. The open state has a weak anion selectivity whereas the closed state is cation-selective. The chain is Mitochondrial outer membrane protein porin 3 (VDAC3) from Arabidopsis thaliana (Mouse-ear cress).